The sequence spans 175 residues: Peptide deformylase (175 aa).

The Fe cation site is built by cysteine 98 and histidine 140. The active site involves glutamate 141. Position 144 (histidine 144) interacts with Fe cation.

Belongs to the polypeptide deformylase family. Fe(2+) is required as a cofactor.

It carries out the reaction N-terminal N-formyl-L-methionyl-[peptide] + H2O = N-terminal L-methionyl-[peptide] + formate. Removes the formyl group from the N-terminal Met of newly synthesized proteins. Requires at least a dipeptide for an efficient rate of reaction. N-terminal L-methionine is a prerequisite for activity but the enzyme has broad specificity at other positions. This Bradyrhizobium sp. (strain BTAi1 / ATCC BAA-1182) protein is Peptide deformylase.